The following is a 1589-amino-acid chain: Sterile alpha motif domain-containing protein 9 (1589 aa).

The region spanning 14 to 78 (WTKEDVNQWL…ELFKELRKTA (65 aa)) is the SAM domain. The disordered stretch occupies residues 83–135 (IQTSKMGKPSKNAPKDQTVSQKERRETSKQKQKGKENPDMANPSAMSTTAKGS). The segment covering 103-120 (QKERRETSKQKQKGKENP) has biased composition (basic and acidic residues).

As to quaternary structure, interacts with RGL2. Interacts with EEA1. In terms of assembly, (Microbial infection) Interacts with myxoma virus protein M062. Widely expressed. Very low levels are detected in skeletal muscle. Not detected in brain. Down-regulated in aggressive fibromatosis, as well as in breast and colon cancers. Up-regulated in fibroblasts from patients with normophosphatemic tumoral calcinosis (NFTC).

It is found in the cytoplasm. Its function is as follows. Double-stranded nucleic acid binding that acts as an antiviral factor by playing an essential role in the formation of cytoplasmic antiviral granules. May play a role in the inflammatory response to tissue injury and the control of extra-osseous calcification, acting as a downstream target of TNF-alpha signaling. Involved in the regulation of EGR1, in coordination with RGL2. May be involved in endosome fusion. The polypeptide is Sterile alpha motif domain-containing protein 9 (SAMD9) (Homo sapiens (Human)).